A 270-amino-acid polypeptide reads, in one-letter code: Protein FAM110D (270 aa).

Residues 1–16 (MLLASPSTPSRGRTPS) are compositionally biased toward low complexity. 3 disordered regions span residues 1 to 83 (MLLA…RPDS), 117 to 142 (RDVA…PQDA), and 186 to 244 (PQSW…QVSV). A compositionally biased stretch (basic residues) spans 68-78 (RPARRGSGRRL).

It belongs to the FAM110 family.

The polypeptide is Protein FAM110D (FAM110D) (Bos taurus (Bovine)).